The following is a 589-amino-acid chain: Putative ABC transporter ATP-binding protein MG015 (589 aa).

6 helical membrane passes run 9–29 (LLYV…NPIL), 66–86 (LTIV…FNVA), 161–181 (LIFL…ATLI), 251–271 (IFLF…SISI), 280–300 (IPSF…IASL), and 303–323 (ITLA…GVVS). The region spanning 9–319 (LLYVFLCIVL…IFTLWNLVQL (311 aa)) is the ABC transmembrane type-1 domain. In terms of domain architecture, ABC transporter spans 352–586 (IRFENVAFGY…NGFYARLKQS (235 aa)). 385 to 392 (GPTGAGKS) provides a ligand contact to ATP.

It belongs to the ABC transporter superfamily.

It is found in the cell membrane. The sequence is that of Putative ABC transporter ATP-binding protein MG015 from Mycoplasma genitalium (strain ATCC 33530 / DSM 19775 / NCTC 10195 / G37) (Mycoplasmoides genitalium).